A 121-amino-acid polypeptide reads, in one-letter code: Cell division protein FtsB (121 aa).

Topologically, residues 1-6 are cytoplasmic; the sequence is MRNWRW. A helical membrane pass occupies residues 7-24; the sequence is LLLVLAVLLAWLQYRFWF. The Periplasmic portion of the chain corresponds to 25–121; that stretch reads GPGNSGEVMM…PEPIDPVDHP (97 aa). A coiled-coil region spans residues 31–66; sequence EVMMLEAQVAHQTQDNEGLRQRNQALAAEVKDLKDG. A disordered region spans residues 92 to 121; sequence EDAPLPAPASPEAPAPPQQAPEPIDPVDHP. Positions 96 to 115 are enriched in pro residues; it reads LPAPASPEAPAPPQQAPEPI.

This sequence belongs to the FtsB family. In terms of assembly, part of a complex composed of FtsB, FtsL and FtsQ.

It localises to the cell inner membrane. In terms of biological role, essential cell division protein. May link together the upstream cell division proteins, which are predominantly cytoplasmic, with the downstream cell division proteins, which are predominantly periplasmic. This Xanthomonas euvesicatoria pv. vesicatoria (strain 85-10) (Xanthomonas campestris pv. vesicatoria) protein is Cell division protein FtsB.